The following is a 1105-amino-acid chain: MFLVNAPPLASFQTKWAPFGQTTACRIPVSFSESEEDISRATISTQVQGIISTLQSDESSLEVTVEHEGIMQKTRKGDFNIERGLKTNAAVLKGHTRESATLVVPAEFRDNKDDHSEFGPLMLESDSDDSVDRDIEEAIQEYLKKKDTGEASNEGLNTTSSTSVEHGVLLNDAQNFAAANTCPVSMVTTSDICNSFRLKEQQRSSSPVSVSSDDSFEQSIKAEIEQFLNDKKQQKSKSKISSPPKVPCIETQSKPKLKTSKTSEKQNSKQAGSELLRKHASDSKLLRPSPETTKIQPKACVLKQNTKTSSPSPKSTPIVKEEPSDSSSDDGIEEAIQLYQLEKRRQGITPTVTPEKVKSPTSANSLTHFESRKRKSLNNKLAASQDISNCQPLLSKRPVLSEEDSFSKREIGAPTTCRAETAAELMCAEAILDISKTILPSQPQSTYVIPTEPPPPPPEPQCDSDSLVDSDDSIEQEIRTFLARKAQVEGAGISPVKLETTIETSPELGSQSSKLSLTHKRKAKAMQSDLMRKTLPLDKLGSNVELNQYPQPDERLQSSGKFAAKLSAPSEIHMGAGESIVIPEVSTALNRGRGRSHGLTRSYSSGDKSSSLDSDEDLDTAIKDLLKSKRKYKKRPKDGKSQCKKRVRFDETISKPVEISEDSKQPPKDPPFIKSCLLNSSTAKENSLEKSKKRREEKAVERNIPSCSSSPQGNKDGQPMPACASNEPNSKTRALDDAHESSSVDSDDGIEQEIRKFLAERAKVSSALTAAQNEAVSDSNIEKNTQTLKQEQAVLLNPVPETALQPEPCANISTAATAQASVVQLLALHSGKQSLLPVRLFNTRPVEVRTGMSPQSTPNCFIIKKECLVEQNSIIKPIEQCLPTAPGRVITQANLNSPQNFPVAGNFVAGLKYVSGTEKQLLLNVGHTGPSKLATEICKSMVHNSRLANCPPLDRKGPALERSKELPAISIIPKSPLVRSGLYLLTTKVCKENSPSLCLPINTTAYKTGINLMSIQYCQVNTQKPPCVGELSVNQPKSAESRVSVPGHATNPPLFVTRSREFKAAREGVEREGRTNLNKAASHDLVADSVKKVKEIKNSQESKNV.

Disordered stretches follow at residues 228 to 382, 444 to 468, 504 to 526, and 589 to 748; these read LNDK…NKLA, QSTY…DSLV, TSPE…AKAM, and LNRG…DSDD. Residues 275 to 285 show a composition bias toward basic and acidic residues; it reads LLRKHASDSKL. Low complexity predominate over residues 306 to 317; it reads TKTSSPSPKSTP. Positions 359-368 are enriched in polar residues; that stretch reads SPTSANSLTH. Over residues 451–460 the composition is skewed to pro residues; the sequence is TEPPPPPPEP. Residues 504 to 516 show a composition bias toward polar residues; sequence TSPELGSQSSKLS. The span at 602–612 shows a compositional bias: low complexity; sequence SYSSGDKSSSL. Over residues 628–647 the composition is skewed to basic residues; that stretch reads SKRKYKKRPKDGKSQCKKRV. Positions 686–701 are enriched in basic and acidic residues; sequence NSLEKSKKRREEKAVE. Polar residues predominate over residues 705–715; the sequence is PSCSSSPQGNK. Positions 733–742 are enriched in basic and acidic residues; the sequence is RALDDAHESS.

The protein localises to the nucleus. It is found in the nucleolus. Functionally, may inhibit phosphatase activity of protein phosphatase 1 (PP1) complexes. May positively regulate cell proliferation. The polypeptide is Protein phosphatase 1 regulatory subunit 26 (ppp1r26) (Xenopus laevis (African clawed frog)).